Reading from the N-terminus, the 473-residue chain is Spliceosome-associated protein CWC27 homolog (473 aa).

Position 2 is an N-acetylserine (Ser2). The 156-residue stretch at 11–166 (TNGKVLLKTT…NPHKIKSCEV (156 aa)) folds into the PPIase cyclophilin-type domain. Over residues 177–193 (REIKRPKKEKPEEEVKK) the composition is skewed to basic and acidic residues. 2 disordered regions span residues 177 to 386 (REIK…EDQT) and 399 to 473 (QAIA…KERR). Positions 206-230 (SFGEEAEEEEEEVNRVSQSMKGKSK) form a coiled coil. Residues 231 to 241 (SSHDLLKDDPH) are compositionally biased toward basic and acidic residues. Residues 257-275 (GDLDDDGEDESAEYDEYVD) are compositionally biased toward acidic residues. Composition is skewed to basic and acidic residues over residues 276-287 (GDEKNLMRERIA), 305-348 (EVEK…KRSE), and 360-372 (EYRR…EALR). The stretch at 307 to 378 (EKKSVSRSEE…EALRKQQSKK (72 aa)) forms a coiled coil. Ser347 carries the post-translational modification Phosphoserine. The span at 405–419 (PENDIPETEVEDDEG) shows a compositional bias: acidic residues. 2 stretches are compositionally biased toward basic and acidic residues: residues 426 to 438 (QFED…KDAS) and 458 to 473 (RREE…KERR).

The protein belongs to the cyclophilin-type PPIase family. In terms of assembly, part of the activated spliceosome B/catalytic step 1 spliceosome, one of the forms of the spliceosome which has a well-formed active site but still cannot catalyze the branching reaction and is composed at least of 52 proteins, the U2, U5 and U6 snRNAs and the pre-mRNA. Recruited during early steps of activated spliceosome B maturation, it is probably one of the first proteins released from this complex as he matures to the spliceosome C complex. Component of the minor spliceosome, which splices U12-type introns.

The protein localises to the nucleus. Functionally, as part of the spliceosome, plays a role in pre-mRNA splicing. Probable inactive PPIase with no peptidyl-prolyl cis-trans isomerase activity. As a component of the minor spliceosome, involved in the splicing of U12-type introns in pre-mRNAs. The chain is Spliceosome-associated protein CWC27 homolog from Macaca fascicularis (Crab-eating macaque).